Here is a 301-residue protein sequence, read N- to C-terminus: Runt-related transcription factor rnt-1 (301 aa).

In terms of domain architecture, Runt spans 10 to 138; the sequence is NFIEQQPAPA…TVDGPRDARI (129 aa). Interaction with DNA stretches follow at residues 40–44, 95–103, and 128–137; these read RSNKS, RFVGRSGRG, and VTVDGPRDAR. Arg99 and Val130 together coordinate chloride. The segment at 237 to 301 is disordered; that stretch reads PSIFITPTSD…SSSPTIWRPF (65 aa). Residue Ser255 is modified to Phosphoserine. Polar residues predominate over residues 255–276; sequence SPRSITKSSETSINLIQETPES. Low complexity predominate over residues 285-301; sequence VSITSSNSSSPTIWRPF.

In terms of assembly, interacts with CBFbeta homolog bro-1; acts to increase the affinity and specificity of interaction of rnt-1 with DNA. Interacts with TGF-beta pathway protein sma-4. May be ubiquitinated in order to be targeted for proteasome-mediated degradation in intestinal cells. In terms of processing, may be phosphorylated by members of the p38 MAP kinase pathway. Expressed in the intestine.

It is found in the nucleus. Functionally, transcription factor. Binds to regulatory DNA sequences in order to modulate transcription; negatively autoregulates its own expression, perhaps dependent upon CBF beta homolog bro-1. Promotes proliferation, and prevents differentiation, of seam cells, a stem cell-like lineage, acting in concert with bro-1. Required for controlling cell proliferation in the seam cells, perhaps by repressing expression of cyclin-dependent kinase inhibitor cki-1. Inhibition of seam cell differentiation is regulated by rnt-1 and bro-1, perhaps acting upstream of pop-1, by antagonizing pop-1 repressor function. Required for asymmetrical cell divisions in the lineage derived from a posterior embryonic seam cell, the T blast cell, and for asymmetric expression of zinc finger protein tlp-1. Regulates growth and male tail development. Involved in the oxidative stress response, perhaps downstream of the p38 MAP kinase pathway, and acting as part of a negative feedback loop via a transcriptional target gene, tyrosine-protein phosphatase vhp-1. Positively modulates dopaminergic signaling in a non-cell autonomous manner. May be involved in TGF-beta signaling. This is Runt-related transcription factor rnt-1 from Caenorhabditis elegans.